The following is a 137-amino-acid chain: Holo-[acyl-carrier-protein] synthase (137 aa).

Aspartate 8 and glutamate 57 together coordinate Mg(2+).

The protein belongs to the P-Pant transferase superfamily. AcpS family. Mg(2+) serves as cofactor.

The protein resides in the cytoplasm. It carries out the reaction apo-[ACP] + CoA = holo-[ACP] + adenosine 3',5'-bisphosphate + H(+). Functionally, transfers the 4'-phosphopantetheine moiety from coenzyme A to a Ser of acyl-carrier-protein. This chain is Holo-[acyl-carrier-protein] synthase, found in Cereibacter sphaeroides (strain ATCC 17029 / ATH 2.4.9) (Rhodobacter sphaeroides).